A 147-amino-acid chain; its full sequence is UPF0735 ACT domain-containing protein RBAM_024960 (147 aa).

Positions 70 to 145 constitute an ACT domain; that stretch reads TLFFHLEDRS…FIEKVEILGS (76 aa).

It belongs to the UPF0735 family.

In Bacillus velezensis (strain DSM 23117 / BGSC 10A6 / LMG 26770 / FZB42) (Bacillus amyloliquefaciens subsp. plantarum), this protein is UPF0735 ACT domain-containing protein RBAM_024960.